Reading from the N-terminus, the 116-residue chain is Small ribosomal subunit protein uS17 (116 aa).

Belongs to the universal ribosomal protein uS17 family. In terms of assembly, part of the 30S ribosomal subunit.

In terms of biological role, one of the primary rRNA binding proteins, it binds specifically to the 5'-end of 16S ribosomal RNA. The protein is Small ribosomal subunit protein uS17 of Pyrococcus horikoshii (strain ATCC 700860 / DSM 12428 / JCM 9974 / NBRC 100139 / OT-3).